The chain runs to 317 residues: Probable transcription factor At5g61620 (317 aa).

The CCHC-type zinc finger occupies 12-25 (CSHCGHNGHNARTC). Residues 77-111 (DPIAAVDDTGYHSDGQIHSKKGKTAHEKKKGKPWT) form a disordered region. Positions 94–108 (HSKKGKTAHEKKKGK) are enriched in basic residues. In terms of domain architecture, HTH myb-type spans 102–158 (HEKKKGKPWTEEEHRNFLIGLNKLGKGDWRGIAKSFVSTRTPTQVASHAQKYFIRLN). Positions 130 to 154 (WRGIAKSFVSTRTPTQVASHAQKYF) form a DNA-binding region, H-T-H motif. A disordered region spans residues 173–206 (SLEDQKEKERNSQDASTKTPPKQPITGIQQPVVQ). Residues 175–184 (EDQKEKERNS) show a composition bias toward basic and acidic residues. The span at 185-206 (QDASTKTPPKQPITGIQQPVVQ) shows a compositional bias: polar residues.

It localises to the nucleus. Functionally, probable transcription factor involved in somatic embryogenesis. Acts as a positive regulator of BHLH109. This Arabidopsis thaliana (Mouse-ear cress) protein is Probable transcription factor At5g61620.